The following is a 577-amino-acid chain: Arginine--tRNA ligase (577 aa).

Positions Pro-122–His-132 match the 'HIGH' region motif.

Belongs to the class-I aminoacyl-tRNA synthetase family. Monomer.

The protein resides in the cytoplasm. It catalyses the reaction tRNA(Arg) + L-arginine + ATP = L-arginyl-tRNA(Arg) + AMP + diphosphate. This is Arginine--tRNA ligase from Salmonella paratyphi B (strain ATCC BAA-1250 / SPB7).